The sequence spans 207 residues: Ribosomal RNA small subunit methyltransferase G (207 aa).

Residues Gly71, Phe76, 122–123 (AE), and Arg135 contribute to the S-adenosyl-L-methionine site.

The protein belongs to the methyltransferase superfamily. RNA methyltransferase RsmG family.

The protein localises to the cytoplasm. Its function is as follows. Specifically methylates the N7 position of a guanine in 16S rRNA. This chain is Ribosomal RNA small subunit methyltransferase G, found in Cytophaga hutchinsonii (strain ATCC 33406 / DSM 1761 / CIP 103989 / NBRC 15051 / NCIMB 9469 / D465).